Consider the following 185-residue polypeptide: Protein LPA2 (185 aa).

Residues 1–46 (MALQIHSPCSFSTRPYHLFFTTRNPRFAIKCQNSQIESDTTEDPSR) constitute a chloroplast transit peptide. A disordered region spans residues 35-105 (QIESDTTEDP…VFMSEEGAAK (71 aa)). Positions 47–75 (SKNSSSSGVGFGSPASSSSPAKKLSAATS) are enriched in low complexity. The span at 83–92 (KREVNRRAPV) shows a compositional bias: basic and acidic residues. The next 2 membrane-spanning stretches (helical) occupy residues 115–135 (AFLL…IILA) and 152–172 (VYPV…AYGV).

Its subcellular location is the plastid. The protein localises to the chloroplast membrane. The sequence is that of Protein LPA2 from Arabidopsis thaliana (Mouse-ear cress).